The sequence spans 329 residues: Probable tyrosine--tRNA ligase, cytoplasmic (329 aa).

Residue Tyr35 coordinates L-tyrosine. Residues 40–48 (TTGKPHIAY) carry the 'HIGH' region motif. The L-tyrosine site is built by Tyr162, Gln166, Asp169, and Gln184. Positions 218–222 (KMSSS) match the 'KMSKS' region motif.

This sequence belongs to the class-I aminoacyl-tRNA synthetase family. Homodimer.

The protein resides in the cytoplasm. It catalyses the reaction tRNA(Tyr) + L-tyrosine + ATP = L-tyrosyl-tRNA(Tyr) + AMP + diphosphate + H(+). In Vairimorpha ceranae (strain BRL01) (Microsporidian parasite), this protein is Probable tyrosine--tRNA ligase, cytoplasmic.